The following is a 484-amino-acid chain: MSIRNTINRIIIRRNMSDSIRHYDYLVIGGGSGGVASSRRAASYGAKTLLIEAKAMGGTCVNKGCVPKKVMWYASDLATRIGHAHSYNLFEDLPLTKENLTFNWPEFKKKRDAYIHRLNGIYERNLTKEGVDYVYGWASFTVDGKVQVKKADNCTETYTADHILVATGGKPIYPAKIPGYDYGVSSDEFFELEDQPKKVVVVGAGYIGVEIAGVFNGLGSDSHLVIRGETVLRKFDDCIQETVTDTYIKEGVNIHKSSNVTKVEKDESTGKLNIQLDTGKNIDNVDSLIWTIGRRSLLGLGLENIGVKLDAKEQIVVDEYQNSSVKNVYSLGDVVGKVELTPVAIAAGRKLSNRLFGPEKFKNQKQDYENVPSVVFSHPEAGSIGLSEREAIEKFGKDNVKVYNSKFNAMYYAMMEEKDKTPTRYKLVCTGEEEKVVGLHIIGDSSAEILQGFGVAIKMGATKADFDSCVAIHPTSAEELVTLT.

Positions 32 and 33 each coordinate FAD. Glutathione is bound at residue Ser32. Arg39 is a glutathione binding site. FAD is bound by residues Glu52, Thr59, Cys60, and Lys68. Cys60 and Cys65 are oxidised to a cystine. Glutathione is bound at residue Tyr122. Residue Ala138 participates in FAD binding. Residues Ala204, Ile207, Glu210, Arg227, and Arg233 each contribute to the NADP(+) site. Thr242 is a binding site for glutathione. Position 293 (Gly293) interacts with NADP(+). An FAD-binding site is contributed by Asp333. An NADP(+)-binding site is contributed by Glu339. Thr341 provides a ligand contact to FAD. Arg349 is a glutathione binding site. Val374 is a binding site for NADP(+). Lys426 provides a ligand contact to glutathione. FAD is bound at residue His473. His473 serves as the catalytic Proton acceptor.

It belongs to the class-I pyridine nucleotide-disulfide oxidoreductase family. In terms of assembly, homodimer. It depends on FAD as a cofactor.

It localises to the cytoplasm. It is found in the mitochondrion. The catalysed reaction is 2 glutathione + NADP(+) = glutathione disulfide + NADPH + H(+). Functionally, catalyzes the reduction of glutathione disulfide (GSSG) to reduced glutathione (GSH). Constitutes the major mechanism to maintain a high GSH:GSSG ratio in the cytosol. The polypeptide is Glutathione reductase (GLR1) (Kluyveromyces lactis (strain ATCC 8585 / CBS 2359 / DSM 70799 / NBRC 1267 / NRRL Y-1140 / WM37) (Yeast)).